The sequence spans 452 residues: Probable alpha-galactosidase B (452 aa).

The first 24 residues, 1 to 24, serve as a signal peptide directing secretion; that stretch reads MLHRATTTAAAAAAAALLLCPVQA. An intrachain disulfide couples cysteine 47 to cysteine 79. N-linked (GlcNAc...) asparagine glycans are attached at residues asparagine 87 and asparagine 138. Cysteine 129 and cysteine 159 are oxidised to a cystine. Aspartate 157 serves as the catalytic Nucleophile. A glycan (N-linked (GlcNAc...) asparagine) is linked at asparagine 184. 231–235 is a substrate binding site; the sequence is DWGQA. The active-site Proton donor is the aspartate 253. Residues asparagine 292, asparagine 391, asparagine 409, and asparagine 410 are each glycosylated (N-linked (GlcNAc...) asparagine).

Belongs to the glycosyl hydrolase 27 family.

It is found in the secreted. It carries out the reaction Hydrolysis of terminal, non-reducing alpha-D-galactose residues in alpha-D-galactosides, including galactose oligosaccharides, galactomannans and galactolipids.. Its function is as follows. Hydrolyzes a variety of simple alpha-D-galactoside as well as more complex molecules such as oligosaccharides and polysaccharides. The polypeptide is Probable alpha-galactosidase B (Talaromyces emersonii (Thermophilic fungus)).